The following is a 255-amino-acid chain: 3-deoxy-manno-octulosonate cytidylyltransferase (255 aa).

Belongs to the KdsB family.

The protein resides in the cytoplasm. It carries out the reaction 3-deoxy-alpha-D-manno-oct-2-ulosonate + CTP = CMP-3-deoxy-beta-D-manno-octulosonate + diphosphate. It participates in nucleotide-sugar biosynthesis; CMP-3-deoxy-D-manno-octulosonate biosynthesis; CMP-3-deoxy-D-manno-octulosonate from 3-deoxy-D-manno-octulosonate and CTP: step 1/1. It functions in the pathway bacterial outer membrane biogenesis; lipopolysaccharide biosynthesis. In terms of biological role, activates KDO (a required 8-carbon sugar) for incorporation into bacterial lipopolysaccharide in Gram-negative bacteria. The sequence is that of 3-deoxy-manno-octulosonate cytidylyltransferase from Pelobacter propionicus (strain DSM 2379 / NBRC 103807 / OttBd1).